Here is a 683-residue protein sequence, read N- to C-terminus: Receptor-like serine/threonine-protein kinase At2g45590 (683 aa).

The segment at 1 to 21 (MPSRLSPPDIPPLQPTPTVSD) is disordered. The Extracellular segment spans residues 1–30 (MPSRLSPPDIPPLQPTPTVSDGHHRFQTLP). The helical transmembrane segment at 31 to 51 (LIIAGSLTLTGVLLILVTLLI) threads the bilayer. At 52–683 (YRRLYRNRTA…FPFKSRKKAR (632 aa)) the chain is on the cytoplasmic side. In terms of domain architecture, Protein kinase spans 92 to 664 (FSESTHLGHG…GVSEPPHLPF (573 aa)). ATP-binding positions include 98–106 (LGHGGFGSV) and Lys-121. Asp-223 serves as the catalytic Proton acceptor. The segment at 406 to 436 (ERPSNNKEWINNGDGSSSVSKKKKKEKKRKP) is disordered. Residues 411–424 (NKEWINNGDGSSSV) are compositionally biased toward polar residues. Residues 425 to 436 (SKKKKKEKKRKP) show a composition bias toward basic residues.

This sequence belongs to the protein kinase superfamily. Ser/Thr protein kinase family.

It is found in the cell membrane. It catalyses the reaction L-seryl-[protein] + ATP = O-phospho-L-seryl-[protein] + ADP + H(+). The catalysed reaction is L-threonyl-[protein] + ATP = O-phospho-L-threonyl-[protein] + ADP + H(+). This chain is Receptor-like serine/threonine-protein kinase At2g45590, found in Arabidopsis thaliana (Mouse-ear cress).